A 466-amino-acid polypeptide reads, in one-letter code: MAPQQNIMKQLQQMQSSPYPSSSPSSTTVSQNNDNLNHNVHSLNNSSNNNNNNNNNNNNNNNNNNNNNNNNNNNNNNNNNNNNSINEKNKINDNNNRGNSDDGNNNNSNNNSNNNNSNNNNRDDEEEEGDDEDNNNNNNSNNNKIRGYNDNNDINDIFSINFSSWSKSKDNLIENGVLIFEESGLYKELNLSKSSILNFLSIVASSYRNNPFHSFNHAIAVTQTIFLILLKTNLFNILSPIEKLSIIIASICHDLDHPALSNRFQINMKSSIAVLYNNKSVLENHHLSICLGILESKIGNELLSTLTVEEKKQFFRRVKILILATDMENHFTYKKQFDDIISTFSWDNSEHRDLLLIMFLKSADISNELRSFDISNKWANALMEEFFNQSDLEKLNNLPLTPFMEREKVVLHLTQVSFIEKFLLPSYQSLQNLLPSLEDFVQRIIENKEIWSNNGSSSSTTSSSPN.

Over residues 1 to 120 (MAPQQNIMKQ…NSNNNNSNNN (120 aa)) the composition is skewed to low complexity. Residues 1–150 (MAPQQNIMKQ…NNNKIRGYND (150 aa)) are disordered. Residues 123 to 134 (DDEEEEGDDEDN) show a composition bias toward acidic residues. Residues 135–150 (NNNNNSNNNKIRGYND) are compositionally biased toward low complexity. In terms of domain architecture, PDEase spans 137–458 (NNNSNNNKIR…EIWSNNGSSS (322 aa)). Catalysis depends on His-213, which acts as the Proton donor. A divalent metal cation is bound by residues His-217, His-253, Asp-254, and Asp-364.

The protein belongs to the cyclic nucleotide phosphodiesterase family. A divalent metal cation serves as cofactor.

Its subcellular location is the cytoplasm. It is found in the cytosol. The catalysed reaction is 3',5'-cyclic GMP + H2O = GMP + H(+). With respect to regulation, inhibited by 3-isobutyl-1-methylxanthine (IBMX). Functionally, phosphodiesterase specific for cGMP, which is not activated by cGMP. Involved in the degradation of intracellular cGMP. The protein is cGMP-specific 3',5'-cGMP phosphodiesterase 3 (pde3) of Dictyostelium discoideum (Social amoeba).